A 149-amino-acid polypeptide reads, in one-letter code: MDQADPREIQTLQMYLNEYGQQIELMTQQLSMIEQQRLEGTAAIETLRALQENADGAVLLPIGGGAYLRVKVLDAGHVLVNIGADVSVERATADAVGYLEDRITELEALAKKVAGSVEQLQGQATEISRRLEAAYRGARQAQAGQGGSS.

Belongs to the prefoldin alpha subunit family. Heterohexamer of two alpha and four beta subunits.

Its subcellular location is the cytoplasm. Its function is as follows. Molecular chaperone capable of stabilizing a range of proteins. Seems to fulfill an ATP-independent, HSP70-like function in archaeal de novo protein folding. This Methanoculleus marisnigri (strain ATCC 35101 / DSM 1498 / JR1) protein is Prefoldin subunit alpha.